We begin with the raw amino-acid sequence, 270 residues long: Probable inner membrane protein BTH_II0599 (270 aa).

6 helical membrane-spanning segments follow: residues 24-44 (RNPLAFVTLFFTYLLAMMLVS), 45-65 (LVPVIGAALPLLLIPGIAVGF), 98-118 (LLTLGGLYIVSMAAVFACSAL), 150-170 (ALIAAALYAPVAMMFWFAPVL), 198-218 (VYGLLWFALALGVSFGLAALM), and 226-246 (YALMVMMPASIVITAMLYCSF).

The protein localises to the cell inner membrane. (Microbial infection) Probably transports the toxic C-terminal region of CdiA-2 from B.pseudomallei strain 1026b across the inner membrane to the cytoplasm, where CdiA has a toxic effect. Expression in E.coli makes the bacteria sensitive to the tRNase domain of B.pseudomallei strain 1026b CdiA-2. In Burkholderia thailandensis (strain ATCC 700388 / DSM 13276 / CCUG 48851 / CIP 106301 / E264), this protein is Probable inner membrane protein BTH_II0599.